Here is a 333-residue protein sequence, read N- to C-terminus: MSWIKEGELSLWERFCANIIKAGPMPKHIAFIMDGNRRYAKKCQVERQEGHSQGFNKLAETLRWCLNLGILEVTVYAFSIENFKRSKSEVDGLMDLARQKFSRLMEEKEKLQKHGVCIRVLGDLHLLPLDLQELIAQAVQATKNYNKCFLNVCFAYTSRHEISNAVREMAWGVEQGLLDPSDISESLLDKCLYTNRSPHPDILIRTSGEVRLSDFLLWQTSHSCLVFQPVLWPEYTFWNLFEAILQFQMNHSVLQKARDMYAEERKRQQLERDQATVTEQLLREGLQASGDAQLRRTRLHKLSARREERVQGFLQALELKRADWLARLGTASA.

(2E,6E)-farnesyl diphosphate-binding residues include Asp-34, Gly-35, Arg-37, Arg-38, and Arg-85. 8 residues coordinate isopentenyl diphosphate: Asp-34, Gly-35, Arg-37, Arg-38, Arg-85, Arg-205, Arg-211, and Ser-213. Residue Asp-34 coordinates Mg(2+).

It belongs to the UPP synthase family. The active dehydrodolichyl diphosphate synthase complex is a heterotetramer composed of a dimer of heterodimer of DHDDS and NUS1. Interacts with NPC2. It depends on Mg(2+) as a cofactor. In terms of tissue distribution, ubiquitous. Expressed at high levels in testis and kidney. Expressed in epididymis (at protein level).

The protein localises to the endoplasmic reticulum membrane. It carries out the reaction n isopentenyl diphosphate + (2E,6E)-farnesyl diphosphate = a di-trans,poly-cis-polyprenyl diphosphate + n diphosphate. It participates in protein modification; protein glycosylation. The protein operates within lipid metabolism. Its activity is regulated as follows. Activated by phospholipids including cardiolipin, phosphatidylcholine, phosphatidylethanolamine, phosphatidylinositol and phosphatidylserine. Its function is as follows. With NUS1, forms the dehydrodolichyl diphosphate synthase (DDS) complex, an essential component of the dolichol monophosphate (Dol-P) biosynthetic machinery. Both subunits contribute to enzymatic activity, i.e. condensation of multiple copies of isopentenyl pyrophosphate (IPP) to farnesyl pyrophosphate (FPP) to produce dehydrodolichyl diphosphate (Dedol-PP), a precursor of dolichol phosphate which is utilized as a sugar carrier in protein glycosylation in the endoplasmic reticulum (ER). Synthesizes long-chain polyprenols, mostly of C95 and C100 chain length. Regulates the glycosylation and stability of nascent NPC2, thereby promoting trafficking of LDL-derived cholesterol. This Homo sapiens (Human) protein is Dehydrodolichyl diphosphate synthase complex subunit DHDDS.